We begin with the raw amino-acid sequence, 501 residues long: Vitamin D 25-hydroxylase (501 aa).

Ala250 contacts substrate. Cys448 lines the heme pocket.

It belongs to the cytochrome P450 family. Homodimer. Heme serves as cofactor. As to expression, highly expressed in the liver and testis.

The protein resides in the endoplasmic reticulum membrane. The protein localises to the microsome membrane. The enzyme catalyses calciol + reduced [NADPH--hemoprotein reductase] + O2 = calcidiol + oxidized [NADPH--hemoprotein reductase] + H2O + H(+). It carries out the reaction vitamin D2 + reduced [NADPH--hemoprotein reductase] + O2 = 25-hydroxyvitamin D2 + oxidized [NADPH--hemoprotein reductase] + H2O + H(+). The catalysed reaction is 1alpha-hydroxyvitamin D2 + reduced [NADPH--hemoprotein reductase] + O2 = 1alpha,25-dihydroxyvitamin D2 + oxidized [NADPH--hemoprotein reductase] + H2O + H(+). It catalyses the reaction alfacalcidol + reduced [NADPH--hemoprotein reductase] + O2 = calcitriol + oxidized [NADPH--hemoprotein reductase] + H2O + H(+). The protein operates within hormone biosynthesis; vitamin D biosynthesis. In terms of biological role, a cytochrome P450 monooxygenase involved in activation of vitamin D precursors. Catalyzes hydroxylation at C-25 of both forms of vitamin D, vitamin D(2) and D(3) (calciol). Can metabolize vitamin D analogs/prodrugs 1alpha-hydroxyvitamin D(2) (doxercalciferol) and 1alpha-hydroxyvitamin D(3) (alfacalcidol) forming 25-hydroxy derivatives. Mechanistically, uses molecular oxygen inserting one oxygen atom into a substrate, and reducing the second into a water molecule, with two electrons provided by NADPH via cytochrome P450 reductase (CPR; NADPH-ferrihemoprotein reductase). This is Vitamin D 25-hydroxylase (Cyp2r1) from Mus musculus (Mouse).